A 248-amino-acid polypeptide reads, in one-letter code: Proteasome subunit alpha type-7 (248 aa).

The O-linked (GlcNAc) serine glycan is linked to S130. Phosphotyrosine is present on Y153. An N6-acetyllysine modification is found at K227.

This sequence belongs to the peptidase T1A family. As to quaternary structure, the 26S proteasome consists of a 20S proteasome core and two 19S regulatory subunits. The 20S proteasome core is a barrel-shaped complex made of 28 subunits that are arranged in four stacked rings. The two outer rings are each formed by seven alpha subunits, and the two inner rings are formed by seven beta subunits. The proteolytic activity is exerted by three beta-subunits PSMB5, PSMB6 and PSMB7. PSMA7 interacts directly with the PSMG1-PSMG2 heterodimer which promotes 20S proteasome assembly. Interacts with HIF1A. Interacts with RAB7A. Interacts with PRKN. Interacts with ABL1 and ABL2. Interacts with EMAP2. Interacts with MAVS.

It localises to the cytoplasm. The protein localises to the nucleus. Its function is as follows. Component of the 20S core proteasome complex involved in the proteolytic degradation of most intracellular proteins. This complex plays numerous essential roles within the cell by associating with different regulatory particles. Associated with two 19S regulatory particles, forms the 26S proteasome and thus participates in the ATP-dependent degradation of ubiquitinated proteins. The 26S proteasome plays a key role in the maintenance of protein homeostasis by removing misfolded or damaged proteins that could impair cellular functions, and by removing proteins whose functions are no longer required. Associated with the PA200 or PA28, the 20S proteasome mediates ubiquitin-independent protein degradation. This type of proteolysis is required in several pathways including spermatogenesis (20S-PA200 complex) or generation of a subset of MHC class I-presented antigenic peptides (20S-PA28 complex). Inhibits the transactivation function of HIF-1A under both normoxic and hypoxia-mimicking conditions. The interaction with EMAP2 increases the proteasome-mediated HIF-1A degradation under the hypoxic conditions. Plays a role in hepatitis C virus internal ribosome entry site-mediated translation. Mediates nuclear translocation of the androgen receptor (AR) and thereby enhances androgen-mediated transactivation. Promotes MAVS degradation and thereby negatively regulates MAVS-mediated innate immune response. The polypeptide is Proteasome subunit alpha type-7 (PSMA7) (Bos taurus (Bovine)).